Consider the following 152-residue polypeptide: 3-hydroxyacyl-[acyl-carrier-protein] dehydratase FabZ (152 aa).

Residue His-58 is part of the active site.

Belongs to the thioester dehydratase family. FabZ subfamily.

It is found in the cytoplasm. It catalyses the reaction a (3R)-hydroxyacyl-[ACP] = a (2E)-enoyl-[ACP] + H2O. In terms of biological role, involved in unsaturated fatty acids biosynthesis. Catalyzes the dehydration of short chain beta-hydroxyacyl-ACPs and long chain saturated and unsaturated beta-hydroxyacyl-ACPs. This Prochlorococcus marinus (strain MIT 9312) protein is 3-hydroxyacyl-[acyl-carrier-protein] dehydratase FabZ.